We begin with the raw amino-acid sequence, 322 residues long: Hapalindole dimethylallyltransferase (322 aa).

Residues Arg-46, Arg-60, Lys-115, Asn-166, Tyr-168, Arg-221, Tyr-225, and Lys-275 each coordinate dimethylallyl diphosphate.

Belongs to the aromatic prenyltransferase family.

The enzyme catalyses hapalindole G + dimethylallyl diphosphate = ambiguine A + diphosphate. It carries out the reaction hapalindole U + dimethylallyl diphosphate + H(+) = ambiguine H + diphosphate. With respect to regulation, activity is slightly increased in the presence of Mg(2+). Functionally, prenyltransferase involved in the biosynthesis of ambiguines, a family of hapalindole-type alkaloids. Catalyzes the reverse prenylation of hapalindole G or U at the C2 position with dimethylallyl diphosphate (DMAPP) to generate ambiguine A or H, respectively. In addition, accepts hapalindole A, an epimer of hapalindole G, and catalyzes normal prenylation at its C2 position. The sequence is that of Hapalindole dimethylallyltransferase from Fischerella ambigua (strain UTEX 1903).